Consider the following 39-residue polypeptide: U-limacoditoxin(13)-As54 (39 aa).

Residues 1–23 (MSKYIVLLVVSAIALLQFSMIEC) form the signal peptide. Phe37 carries the post-translational modification Phenylalanine amide.

Belongs to the FARP (FMRFamide related peptide) family. Expressed by the venom secretory cell of the spine. The spine is a cuticular structure containing a single large nucleated venom-secreting cell at its base. It is an independent unit capable of producing, storing and injecting venom. On the back of A.stimulea caterpillars, spines are grouped together by 50 to 100 to form scoli, of which there are eight.

The protein localises to the secreted. Strongly activates (at 30 uM) the human neuropeptide FF receptor 1 (NPFF1R), a G-protein coupled receptor, with an effect that is equipotent to the endogenous RFRP-1 ligand in activating NPFFR1. Is toxic when injected into Drosophila melanogaster. Also shows a moderate anthelmintic activity against the parasitic nematode H.contortus (drug susceptible Kirby isolate) (IC(50)=20.1 uM). The chain is U-limacoditoxin(13)-As54 from Acharia stimulea (Saddleback caterpillar moth).